Reading from the N-terminus, the 395-residue chain is Proteinase-activated receptor 4 (395 aa).

A signal peptide spans 1-16 (MCWPLLYPLMLGFSIS). Residues 17–58 (PAECQTPSIYDDVESTREGQEASLRPTVELNESKSPDKPNPR) constitute a propeptide, removed for receptor activation. The interval 46–66 (LNESKSPDKPNPRGFPGKPCA) is disordered. Over residues 47 to 56 (NESKSPDKPN) the composition is skewed to basic and acidic residues. At 59–93 (GFPGKPCANNSDTLELPASSEALLLGWVPTRLVPA) the chain is on the extracellular side. Asparagine 67 carries an N-linked (GlcNAc...) asparagine glycan. A helical transmembrane segment spans residues 94-114 (IYGLVVVVGLPANGLALWVLA). At 115–119 (TRVPR) the chain is on the cytoplasmic side. Residues 120-140 (LPSTILLMNLAVADLLLALVL) traverse the membrane as a helical segment. Residues 141 to 161 (PPRLVYHLRGQRWPFGEAACR) are Extracellular-facing. The cysteines at positions 160 and 239 are disulfide-linked. The chain crosses the membrane as a helical span at residues 162 to 182 (VATAALYGHMYGSVLLLAAVS). The Cytoplasmic segment spans residues 183–203 (LDRYLALVHSLRARALRGQRL). The chain crosses the membrane as a helical span at residues 204–224 (TTILCLVAWLSAATLVLPLTF). The Extracellular segment spans residues 225–254 (HRQTFLLAGSDRMLCHDALPLAEQTSHWRP). A helical transmembrane segment spans residues 255 to 275 (AFICLAVLGCFVPLLAMVLCY). Over 276–295 (GATLRALAANGQRYSHAVRL) the chain is Cytoplasmic. A helical transmembrane segment spans residues 296–316 (TALVLFSAVAAFTPSNVLLVL). Residues 317 to 330 (HYSNPSPEAWGNLY) are Extracellular-facing. A helical membrane pass occupies residues 331-354 (GAYVPSLALSTLNSCVDPFIYYYV). Over 355-395 (SHEFREKVRAMLCRQLKASSSSQASREAGSRGTAICSSTLL) the chain is Cytoplasmic.

The protein belongs to the G-protein coupled receptor 1 family. Post-translationally, a proteolytic cleavage generates a new N-terminus that functions as a tethered ligand.

It is found in the cell membrane. In terms of biological role, receptor for activated thrombin or trypsin coupled to G proteins that stimulate phosphoinositide hydrolysis. May play a role in platelets activation. This chain is Proteinase-activated receptor 4 (F2rl3), found in Rattus norvegicus (Rat).